The chain runs to 221 residues: MEDGPLPDLRDIELKLGRKVPESLARSLRGEEPAPREGAADPSGVGGSCSSSSSCSSFAPSVSSSSSSSPASGSPRRSHPSALERLETKLHILRQEMVNLRATDVRLMRQLLLINESIESIKWMIEEKATVTSRGSSLSGSLCSLLESQSTSLRGSYNSLHDGSDGLDGISVGSYLDTLADDVPGHQTPSDLDQFSDSSIIEDSQALHKHPKLDSEYYCFG.

Met1 is subject to N-acetylmethionine. Positions 1–81 (MEDGPLPDLR…SGSPRRSHPS (81 aa)) are disordered. 2 stretches are compositionally biased toward basic and acidic residues: residues 8–21 (DLRDIELKLGRKVP) and 28–39 (LRGEEPAPREGA). Low complexity predominate over residues 48-75 (SCSSSSSCSSFAPSVSSSSSSSPASGSP).

The chain is Leucine rich adaptor protein 1-like (Lurap1l) from Rattus norvegicus (Rat).